The chain runs to 356 residues: Heme A synthase (356 aa).

The next 5 helical transmembrane spans lie at 23-43, 105-125, 141-161, 173-193, and 212-232; these read IAIW…VGGV, FHRL…LYFL, IFLL…SGLV, AHLG…LDLL, and STML…VAGI. His274 is a binding site for heme. The next 3 membrane-spanning stretches (helical) occupy residues 276–296, 307–327, and 329–349; these read LIAW…RAVP, LLLI…LLVV, and LTLA…ALWV. His335 provides a ligand contact to heme.

Belongs to the COX15/CtaA family. Type 2 subfamily. Interacts with CtaB. It depends on heme b as a cofactor.

The protein localises to the cell membrane. The catalysed reaction is Fe(II)-heme o + 2 A + H2O = Fe(II)-heme a + 2 AH2. It participates in porphyrin-containing compound metabolism; heme A biosynthesis; heme A from heme O: step 1/1. In terms of biological role, catalyzes the conversion of heme O to heme A by two successive hydroxylations of the methyl group at C8. The first hydroxylation forms heme I, the second hydroxylation results in an unstable dihydroxymethyl group, which spontaneously dehydrates, resulting in the formyl group of heme A. The chain is Heme A synthase from Nitrosospira multiformis (strain ATCC 25196 / NCIMB 11849 / C 71).